The chain runs to 319 residues: Acetyl-coenzyme A carboxylase carboxyl transferase subunit alpha (319 aa).

A CoA carboxyltransferase C-terminal domain is found at 35-296 (NIDEEVHRLR…KAQLLADLAD (262 aa)).

The protein belongs to the AccA family. Acetyl-CoA carboxylase is a heterohexamer composed of biotin carboxyl carrier protein (AccB), biotin carboxylase (AccC) and two subunits each of ACCase subunit alpha (AccA) and ACCase subunit beta (AccD).

The protein localises to the cytoplasm. It carries out the reaction N(6)-carboxybiotinyl-L-lysyl-[protein] + acetyl-CoA = N(6)-biotinyl-L-lysyl-[protein] + malonyl-CoA. The protein operates within lipid metabolism; malonyl-CoA biosynthesis; malonyl-CoA from acetyl-CoA: step 1/1. Its function is as follows. Component of the acetyl coenzyme A carboxylase (ACC) complex. First, biotin carboxylase catalyzes the carboxylation of biotin on its carrier protein (BCCP) and then the CO(2) group is transferred by the carboxyltransferase to acetyl-CoA to form malonyl-CoA. The sequence is that of Acetyl-coenzyme A carboxylase carboxyl transferase subunit alpha from Klebsiella pneumoniae (strain 342).